The following is a 79-amino-acid chain: Small ribosomal subunit protein bS18 (79 aa).

It belongs to the bacterial ribosomal protein bS18 family. In terms of assembly, part of the 30S ribosomal subunit. Forms a tight heterodimer with protein bS6.

Functionally, binds as a heterodimer with protein bS6 to the central domain of the 16S rRNA, where it helps stabilize the platform of the 30S subunit. The polypeptide is Small ribosomal subunit protein bS18 (Onion yellows phytoplasma (strain OY-M)).